Here is a 564-residue protein sequence, read N- to C-terminus: Urocanate hydratase (564 aa).

Residues 58 to 59 (GG), Q136, 182 to 184 (GMG), E202, R207, 245 to 246 (NA), 266 to 270 (QTSAH), 276 to 277 (YL), and Y325 each bind NAD(+). The active site involves C413. G495 provides a ligand contact to NAD(+).

Belongs to the urocanase family. Requires NAD(+) as cofactor.

It localises to the cytoplasm. It carries out the reaction 4-imidazolone-5-propanoate = trans-urocanate + H2O. The protein operates within amino-acid degradation; L-histidine degradation into L-glutamate; N-formimidoyl-L-glutamate from L-histidine: step 2/3. In terms of biological role, catalyzes the conversion of urocanate to 4-imidazolone-5-propionate. The polypeptide is Urocanate hydratase (Vibrio atlanticus (strain LGP32) (Vibrio splendidus (strain Mel32))).